Consider the following 612-residue polypeptide: Protein lin-61 (612 aa).

MBT repeat units lie at residues 143 to 249 (YLWE…MDKI), 263 to 380 (NDMV…GYQL), 381 to 501 (NAKK…LVPP), and 508 to 607 (FRWD…LQPP).

Interacts preferentially with histone H3 that is dimethylated or trimethylated at 'Lys-9'.

It localises to the nucleus. It is found in the chromosome. Functionally, synthetic multivulva class B (synMuvB) protein required to repress the induction of vulval development by Ras signaling. Unlike other synMuv proteins it does not associate with the multiprotein DRM complex and the NuRD-like complex. Interaction with methylated histone H3 is essential for vulva development. It has a role in maintaining genome stability. The chain is Protein lin-61 (lin-61) from Caenorhabditis elegans.